The chain runs to 433 residues: 5-methylthioadenosine/S-adenosylhomocysteine deaminase (433 aa).

Zn(2+) contacts are provided by H67 and H69. E96, R148, and H186 together coordinate substrate. H213 serves as a coordination point for Zn(2+). Residues E216 and D301 each contribute to the substrate site. D301 contributes to the Zn(2+) binding site.

This sequence belongs to the metallo-dependent hydrolases superfamily. MTA/SAH deaminase family. It depends on Zn(2+) as a cofactor.

The catalysed reaction is S-adenosyl-L-homocysteine + H2O + H(+) = S-inosyl-L-homocysteine + NH4(+). It catalyses the reaction S-methyl-5'-thioadenosine + H2O + H(+) = S-methyl-5'-thioinosine + NH4(+). In terms of biological role, catalyzes the deamination of 5-methylthioadenosine and S-adenosyl-L-homocysteine into 5-methylthioinosine and S-inosyl-L-homocysteine, respectively. Is also able to deaminate adenosine. The sequence is that of 5-methylthioadenosine/S-adenosylhomocysteine deaminase from Desulforamulus reducens (strain ATCC BAA-1160 / DSM 100696 / MI-1) (Desulfotomaculum reducens).